We begin with the raw amino-acid sequence, 739 residues long: MSIWGVRCLTQRFIRQAYILANRRLLGPVPQRSPPAYAPLRPAHSSLYQMVKKRTLEARTKLQANKYPNHQVCVTKPSTTPPVEEYETAVEGAGVPAYANAQFQAHSQSEPLFKVGFADVKSVCSAKDVLKSDSAKLSTSQPVLDSCKATSPCEEFKRKRKETTCQPCDEDGTAPGGGDGGDEECECRMKDLRLKCLLGALAALLAGGFLAWFMTRDTDDSEAKKAEAEEEERKRRLVAGLATSPPSSEDLPKHVPYLIIGGGTAAFSAFRAIKSNDATAKVLMISNEFRKPYMRPPLSKELWYTPNPNEDPIKDYRFKQWTGSERSLFFEPDEFFIDPEDLDDNANGGIAVAQGFSVKKVDAQKRIVTLNDGYEISYDECLIATGCAPKNLPMLRDAPPSVLEKVMVYRTPDDFDRLRKLAAEKRSITIVGNGFIGSELACSLAHYSRENNGGKVYQVFQENANMSKVLPNYLSRWTTAKMEAQGVCVIPNASIRSAVRDETNLKLELNNGMTLMSDVVVVCVGCTPNTDLAGPSRLEVDRSLGGFVVNAELEARRNLYVAGDASCFFDPLLGRRRVEHHDHSVVSGRLAGENMTGAKKPYQHQSMFWSDLGPEIGYEGIGLVDSSLPTVGVFALPSESATRVDQLSESSDSDVPETSTSSSQSSKSDAGASQDGVTCDPDEAGNYGKGVIFYLKNDKIVGILLWNLFNRIGLARTIINQNKKYDDLNEVAKLFEIHA.

Residues 1-42 (MSIWGVRCLTQRFIRQAYILANRRLLGPVPQRSPPAYAPLRP) constitute a mitochondrion transit peptide. Positions 257–564 (YLIIGGGTAA…ARRNLYVAGD (308 aa)) are FAD-dependent oxidoreductase. FAD-binding positions include 261–265 (GGGTA), R295, K300, V358, R410, D564, and 580–581 (HH). The disordered stretch occupies residues 644 to 681 (VDQLSESSDSDVPETSTSSSQSSKSDAGASQDGVTCDP). Positions 656-676 (PETSTSSSQSSKSDAGASQDG) are enriched in low complexity.

Belongs to the FAD-dependent oxidoreductase family. The cofactor is FAD.

Its subcellular location is the mitochondrion intermembrane space. It carries out the reaction A + NADH + H(+) = AH2 + NAD(+). Probable NADH oxidoreductase. Mitochondrial effector of cell death that plays roles in developmentally regulated cell death and normal mitochondrial function. The chain is Putative apoptosis-inducing factor 1, mitochondrial (AIF) from Drosophila melanogaster (Fruit fly).